The sequence spans 624 residues: Alpha-galactosidase 3 (624 aa).

Residues 1-22 form the signal peptide; that stretch reads MSPSAAVLIPLAAAVLLRPVVG. N-linked (GlcNAc...) asparagine glycosylation is found at Asn37, Asn56, Asn197, Asn259, and Asn293. Residue Asp347 is the Nucleophile of the active site. N-linked (GlcNAc...) asparagine glycosylation is present at Asn393. Asp412 functions as the Proton donor in the catalytic mechanism. An N-linked (GlcNAc...) asparagine glycan is attached at Asn469.

Belongs to the glycosyl hydrolase 27 family.

Its subcellular location is the secreted. It carries out the reaction Hydrolysis of terminal, non-reducing alpha-D-galactose residues in alpha-D-galactosides, including galactose oligosaccharides, galactomannans and galactolipids.. Its function is as follows. Alpha-galactosidase involved in the degradation of simple oligosaccharides like melibiose, raffinose and stachyose, and of polymeric galacto(gluco)mannans. The protein is Alpha-galactosidase 3 (agl3) of Hypocrea jecorina (Trichoderma reesei).